The sequence spans 319 residues: Aspartate carbamoyltransferase catalytic subunit (319 aa).

2 residues coordinate carbamoyl phosphate: R65 and T66. L-aspartate is bound at residue K93. The carbamoyl phosphate site is built by R115, H149, and Q152. Positions 182 and 237 each coordinate L-aspartate. Residues G278 and P279 each coordinate carbamoyl phosphate.

This sequence belongs to the aspartate/ornithine carbamoyltransferase superfamily. ATCase family. Heterododecamer (2C3:3R2) of six catalytic PyrB chains organized as two trimers (C3), and six regulatory PyrI chains organized as three dimers (R2).

It catalyses the reaction carbamoyl phosphate + L-aspartate = N-carbamoyl-L-aspartate + phosphate + H(+). It participates in pyrimidine metabolism; UMP biosynthesis via de novo pathway; (S)-dihydroorotate from bicarbonate: step 2/3. In terms of biological role, catalyzes the condensation of carbamoyl phosphate and aspartate to form carbamoyl aspartate and inorganic phosphate, the committed step in the de novo pyrimidine nucleotide biosynthesis pathway. The sequence is that of Aspartate carbamoyltransferase catalytic subunit from Azoarcus sp. (strain BH72).